The chain runs to 414 residues: Putative F-box/kelch-repeat protein At1g20940 (414 aa).

The F-box domain occupies Ser-13–Pro-65. Kelch repeat units lie at residues Leu-281 to Gly-328 and Leu-331 to Pro-378.

In terms of assembly, interacts with DEK3.

It participates in protein modification; protein ubiquitination. Its function is as follows. Probable component of an E3 ubiquitin ligase complex. The polypeptide is Putative F-box/kelch-repeat protein At1g20940 (Arabidopsis thaliana (Mouse-ear cress)).